The primary structure comprises 214 residues: GTP-binding nuclear protein GSP1 (214 aa).

Positions 4–172 (RELTYKICLI…LHLARIFTGR (169 aa)) constitute a Small GTPase Ran-type domain. Position 17–22 (17–22 (GVGKTT)) interacts with GTP. Residues 34 to 42 (KNYNATVGA) are switch-I. GTP-binding positions include glycine 66, 121 to 124 (NKID), and 151 to 153 (SAK). Residues 66-82 (GQEKKAVLKDVYYIGAS) form a switch-II region.

Belongs to the small GTPase superfamily. Ran family. Found in a nuclear export complex with RanGTP, exportin and pre-miRNA.

Its subcellular location is the nucleus. In terms of biological role, GTP-binding protein involved in nucleocytoplasmic transport. Required for the import of protein into the nucleus and also for RNA export. The protein is GTP-binding nuclear protein GSP1 (GSP1) of Encephalitozoon cuniculi (strain GB-M1) (Microsporidian parasite).